The chain runs to 461 residues: Bifunctional protein HldE (461 aa).

The ribokinase stretch occupies residues 1-312; it reads MLEFLSQQKP…IKSFNRVDFE (312 aa). Residue 191–194 coordinates ATP; sequence NKKE. Residue D259 is part of the active site. The interval 334 to 461 is cytidylyltransferase; sequence FTNGCFDIVH…KIIEKIKDKK (128 aa).

In the N-terminal section; belongs to the carbohydrate kinase PfkB family. It in the C-terminal section; belongs to the cytidylyltransferase family. Homodimer.

It catalyses the reaction D-glycero-beta-D-manno-heptose 7-phosphate + ATP = D-glycero-beta-D-manno-heptose 1,7-bisphosphate + ADP + H(+). The catalysed reaction is D-glycero-beta-D-manno-heptose 1-phosphate + ATP + H(+) = ADP-D-glycero-beta-D-manno-heptose + diphosphate. The protein operates within nucleotide-sugar biosynthesis; ADP-L-glycero-beta-D-manno-heptose biosynthesis; ADP-L-glycero-beta-D-manno-heptose from D-glycero-beta-D-manno-heptose 7-phosphate: step 1/4. Its pathway is nucleotide-sugar biosynthesis; ADP-L-glycero-beta-D-manno-heptose biosynthesis; ADP-L-glycero-beta-D-manno-heptose from D-glycero-beta-D-manno-heptose 7-phosphate: step 3/4. In terms of biological role, catalyzes the phosphorylation of D-glycero-D-manno-heptose 7-phosphate at the C-1 position to selectively form D-glycero-beta-D-manno-heptose-1,7-bisphosphate. Its function is as follows. Catalyzes the ADP transfer from ATP to D-glycero-beta-D-manno-heptose 1-phosphate, yielding ADP-D-glycero-beta-D-manno-heptose. The polypeptide is Bifunctional protein HldE (Campylobacter jejuni subsp. doylei (strain ATCC BAA-1458 / RM4099 / 269.97)).